The sequence spans 546 residues: Chaperonin GroEL (546 aa).

ATP contacts are provided by residues Thr-30–Pro-33, Lys-51, Asp-87–Thr-91, Gly-415, Asn-479–Ala-481, and Asp-495.

It belongs to the chaperonin (HSP60) family. As to quaternary structure, forms a cylinder of 14 subunits composed of two heptameric rings stacked back-to-back. Interacts with the co-chaperonin GroES.

The protein localises to the cytoplasm. It catalyses the reaction ATP + H2O + a folded polypeptide = ADP + phosphate + an unfolded polypeptide.. In terms of biological role, together with its co-chaperonin GroES, plays an essential role in assisting protein folding. The GroEL-GroES system forms a nano-cage that allows encapsulation of the non-native substrate proteins and provides a physical environment optimized to promote and accelerate protein folding. The chain is Chaperonin GroEL from Bordetella avium (strain 197N).